We begin with the raw amino-acid sequence, 553 residues long: Glutamyl-tRNA(Gln) amidotransferase subunit B, mitochondrial (553 aa).

The transit peptide at 1 to 18 (MAASTSGYSGVLFRLRKY) directs the protein to the mitochondrion.

Belongs to the GatB/GatE family. GatB subfamily. As to quaternary structure, subunit of the heterotrimeric GatCAB amidotransferase (AdT) complex, composed of A (qrsl1), B (gatb) and C (gatc) subunits.

Its subcellular location is the mitochondrion. It carries out the reaction L-glutamyl-tRNA(Gln) + L-glutamine + ATP + H2O = L-glutaminyl-tRNA(Gln) + L-glutamate + ADP + phosphate + H(+). Allows the formation of correctly charged Gln-tRNA(Gln) through the transamidation of misacylated Glu-tRNA(Gln) in the mitochondria. The reaction takes place in the presence of glutamine and ATP through an activated gamma-phospho-Glu-tRNA(Gln). This is Glutamyl-tRNA(Gln) amidotransferase subunit B, mitochondrial from Danio rerio (Zebrafish).